A 520-amino-acid polypeptide reads, in one-letter code: DNA-(apurinic or apyrimidinic site) endonuclease 2 (520 aa).

Position 59 (Glu-59) interacts with Mg(2+). Residue Tyr-181 is part of the active site. The Mg(2+) site is built by Asp-222, Asn-224, and Asp-353. Catalysis depends on Asp-222, which acts as the Proton donor/acceptor. Positions 476, 478, 500, and 514 each coordinate Zn(2+). The GRF-type zinc finger occupies 476–520; it reads CRHGEESMLKTSKTSANPGRKFWICKRSRGDSNNTESSCGFFQWV.

Belongs to the DNA repair enzymes AP/ExoA family. The cofactor is Mg(2+). Requires Mn(2+) as cofactor.

The protein resides in the nucleus. The catalysed reaction is Exonucleolytic cleavage in the 3'- to 5'-direction to yield nucleoside 5'-phosphates.. In terms of biological role, DNA repair enzyme that cleaves apurinic/apyrimidinic (AP) sites and removes 3'-blocking groups present at single strand breaks of damaged DNA. This chain is DNA-(apurinic or apyrimidinic site) endonuclease 2 (APN2), found in Saccharomyces cerevisiae (strain ATCC 204508 / S288c) (Baker's yeast).